Reading from the N-terminus, the 1025-residue chain is Beta-galactosidase (1025 aa).

The active-site Proton donor is glutamate 482. Glutamate 551 acts as the Nucleophile in catalysis.

It belongs to the glycosyl hydrolase 2 family.

The catalysed reaction is Hydrolysis of terminal non-reducing beta-D-galactose residues in beta-D-galactosides.. This chain is Beta-galactosidase (LAC4), found in Kluyveromyces lactis (strain ATCC 8585 / CBS 2359 / DSM 70799 / NBRC 1267 / NRRL Y-1140 / WM37) (Yeast).